The following is a 450-amino-acid chain: Divalent metal cation transporter MntH (450 aa).

11 consecutive transmembrane segments (helical) span residues 34 to 54 (LSFL…GNWI), 61 to 81 (AQYG…AMLL), 108 to 128 (IAII…IAEV), 141 to 161 (IPLI…LFIM), 170 to 190 (AIVG…VYIS), 212 to 232 (GILY…NLYL), 263 to 283 (IQLS…ASLF), 305 to 325 (PVLG…ALLA), 361 to 381 (SLAV…AAKI), 383 to 403 (QLLV…LIPL), and 422 to 442 (VNII…YLIV).

Belongs to the NRAMP family.

The protein resides in the cell membrane. Functionally, h(+)-stimulated, divalent metal cation uptake system. This is Divalent metal cation transporter MntH from Staphylococcus aureus (strain bovine RF122 / ET3-1).